The primary structure comprises 194 residues: uncharacterized protein (194 aa).

Residues 62 to 93 (GGAGRRTSKAQRVHPQPSHQRQPPPPQHPGPY) form a disordered region.

In terms of tissue distribution, expressed most abundantly in the brain at protein level. Present in cortex, cerebellum and midbrain. Found in neurons. Elevated expressions detected in Alzheimer brain samples. Also expressed in testis.

Its subcellular location is the cytoplasm. This is an uncharacterized protein from Homo sapiens (Human).